Reading from the N-terminus, the 551-residue chain is Tetrachloroethene reductive dehalogenase (551 aa).

A signal peptide (tat-type signal) is located at residues 1–39; it reads MGEINRRNFLKVSILGAAAAAVASASAVKGMVSPLVADA. Residues 411-440 enclose the 4Fe-4S ferredoxin-type 1 domain; the sequence is PRKFGVREFCRLCKKCADACPAQAISHEKD. Residues C420, C423, C426, C430, C467, C478, C481, and C485 each coordinate [4Fe-4S] cluster. The region spanning 478–496 is the 4Fe-4S ferredoxin-type 2 domain; that stretch reads CSNCVAVCSWNKVETWNHD.

Belongs to the PceA family. Requires [4Fe-4S] cluster as cofactor. The cofactor is corrinoid. In terms of processing, predicted to be exported by the Tat system. The position of the signal peptide cleavage has been experimentally proven.

It is found in the cytoplasm. The protein resides in the cell membrane. Its subcellular location is the secreted. It catalyses the reaction trichloroethene + chloride + A + H(+) = tetrachloroethene + AH2. The enzyme catalyses trichloroethene + AH2 = (Z)-1,2-dichloroethene + chloride + A + H(+). PceT is required as a chaperone for prePceA maturation. In the absence or presence of exogenous vitamin B12, the intracellular corrinoid level decreases in fumarate-grown cells and the PceA precursor forms catalytically inactive, corrinoid-free multiprotein aggregates. Exogenous vitamin B12 is not incorporated into the PceA precursor, even though it affects the transposition of the pce gene cluster. Catalyzes the reductive dechlorination of tetrachloroethene (PCE) to trichloroethene (TCE) and of trichloroethene to cis-1,2-dichloroethene (DCE). Can also use various chlorinated ethanes such as tetrachloroethane, pentachloroethane and hexachloroethane. Reduced methyl viologen can act as the artificial electron donor. The protein is Tetrachloroethene reductive dehalogenase of Desulfitobacterium hafniense (strain Y51).